The following is a 327-amino-acid chain: tRNA N6-adenosine threonylcarbamoyltransferase (327 aa).

Fe cation is bound by residues His109 and His113. Substrate-binding positions include 132 to 136, Asp165, Gly178, Asp182, and Asn268; that span reads MVSGG. Position 296 (Asp296) interacts with Fe cation.

It belongs to the KAE1 / TsaD family. Fe(2+) is required as a cofactor.

The protein localises to the cytoplasm. It catalyses the reaction L-threonylcarbamoyladenylate + adenosine(37) in tRNA = N(6)-L-threonylcarbamoyladenosine(37) in tRNA + AMP + H(+). Required for the formation of a threonylcarbamoyl group on adenosine at position 37 (t(6)A37) in tRNAs that read codons beginning with adenine. Is involved in the transfer of the threonylcarbamoyl moiety of threonylcarbamoyl-AMP (TC-AMP) to the N6 group of A37, together with TsaE and TsaB. TsaD likely plays a direct catalytic role in this reaction. In Thermotoga petrophila (strain ATCC BAA-488 / DSM 13995 / JCM 10881 / RKU-1), this protein is tRNA N6-adenosine threonylcarbamoyltransferase.